The primary structure comprises 181 residues: Trafficking protein particle complex subunit 3-like protein (181 aa).

Residue C68 is the site of S-palmitoyl cysteine attachment.

This sequence belongs to the TRAPP small subunits family. BET3 subfamily. Homodimer. Component of the multisubunit TRAPP (transport protein particle) complex, which includes at least TRAPPC2, TRAPPC2L, TRAPPC3, TRAPPC3L, TRAPPC4, TRAPPC5, TRAPPC8, TRAPPC9, TRAPPC10, TRAPPC11 and TRAPPC12.

It is found in the golgi apparatus. The protein resides in the cis-Golgi network. The protein localises to the endoplasmic reticulum. In terms of biological role, may play a role in vesicular transport from endoplasmic reticulum to Golgi. This is Trafficking protein particle complex subunit 3-like protein (TRAPPC3L) from Homo sapiens (Human).